The chain runs to 367 residues: Alginate lyase (367 aa).

The N-terminal stretch at 1–27 (MKTSHLIRIALPGALAAALLASQVSQA) is a signal peptide. Substrate is bound by residues 65-66 (SK), 138-139 (HT), and Tyr-256.

This sequence belongs to the polysaccharide lyase 5 family.

It is found in the periplasm. It carries out the reaction Eliminative cleavage of alginate to give oligosaccharides with 4-deoxy-alpha-L-erythro-hex-4-enuronosyl groups at their non-reducing ends and beta-D-mannuronate at their reducing end.. Its function is as follows. Catalyzes the depolymerization of alginate by cleaving the beta-1,4 glycosidic bond between two adjacent sugar residues via a beta-elimination mechanism. May serve to degrade mislocalized alginate that is trapped in the periplasmic space. Acts preferentially on non-acetylated alginate or its precursor mannuronan. Is able to catalyze cleavage adjacent to either mannuronate or guluronate residues in alginate. Exhaustive digestion of alginate by AlgL generates dimeric and trimeric products. In addition to its enzymatic function, AlgL appears to be required for alginate export, maybe as part of a multi-protein alginate-secretion complex. The chain is Alginate lyase from Pseudomonas aeruginosa (strain ATCC 15692 / DSM 22644 / CIP 104116 / JCM 14847 / LMG 12228 / 1C / PRS 101 / PAO1).